The following is a 670-amino-acid chain: MAPGQMPHQPAPWRGTHPLFLLSPLMGLLSRAWSLLRAPGPPEPWLVEAVTEADQGGAGLEDEAKASLATYHALWGRHPQEETKDSGAAEEDREASPGACPNLEAKHSLPEAWGLSDDDDEKYGGEEATGVPREQKEFMDGQPAPLPLSLLIRSLPDLPGEEESKEEAVTGGGGNEVTAFSFPLSHWECCPGEEEEEEEENGEAVRVCRPVNGATEERTQTEAATKTSMSPSSVGSHLRAWECCSGKESEEEEKDKQAEKGDADPGPHFTSLAQRPSLRTWQHPSSAITEEEEDRDSEEMGASSSVPLTSAFLSDWVYQPEDTEEEDEEEEDCDSEATEDEGEAEVSSATPPPSAFLSAWVYRPGEDTEEEEDCDSEATEDEGEAEVSSATPPTSAFLSAWVYQPGDTEEEEDCDSEATEDEGEAEVSSATPPPSAFLSAWVYRPGEDTEEEDEYEDEDNESGAADLGPSPSLQTQSALLRDQIYQPGEKTDGGEAAEKWGEAESCPFRVAIYLPGEKPPPPWDPPRLPLRLQRRLKSAQTPTRHQDLERLLKTRKVRFSEKVSIHPLVVWAGPAQAARRGPWEQFARDRSRFARRIAQVQEELGPYLTPAARARAWARLGNPPTSLATVPAPTQTSPMTPIQATPLSHALASPSPPCVSPSLDLSGRRG.

Residues 1–21 (MAPGQMPHQPAPWRGTHPLFL) are Cytoplasmic-facing. A required for localization in the endoplasmic reticulum region spans residues 1 to 60 (MAPGQMPHQPAPWRGTHPLFLLSPLMGLLSRAWSLLRAPGPPEPWLVEAVTEADQGGAGL). Positions 22–39 (LSPLMGLLSRAWSLLRAP) form an intramembrane region, helical. Residues 40-670 (GPPEPWLVEA…PSLDLSGRRG (631 aa)) are Cytoplasmic-facing. Disordered regions lie at residues 76 to 144 (GRHP…GQPA), 159 to 178 (PGEEESKEEAVTGGGGNEVT), and 191 to 501 (PGEE…EKWG). The span at 78-87 (HPQEETKDSG) shows a compositional bias: basic and acidic residues. Positions 191 to 202 (PGEEEEEEEENG) are enriched in acidic residues. Residues 254–265 (KDKQAEKGDADP) are compositionally biased toward basic and acidic residues. Positions 271–288 (SLAQRPSLRTWQHPSSAI) are enriched in polar residues. The segment covering 289–299 (TEEEEDRDSEE) has biased composition (acidic residues). Polar residues predominate over residues 302–312 (ASSSVPLTSAF). Acidic residues-rich tracts occupy residues 321–344 (EDTEEEDEEEEDCDSEATEDEGEA) and 367–385 (DTEEEEDCDSEATEDEGEA). Tandem repeats lie at residues 355–381 (AFLSAWVYRPGEDTEEEEDCDSEATED), 396–426 (AFLSAWVYQPGDTEEEEDCDSEATEDEGEAE), 436–462 (AFLSAWVYRPGEDTEEEDEYEDEDNES), and 478–511 (ALLRDQIYQPGEKTDGGEAAEKWGEAESCPFRVA). The segment at 355-511 (AFLSAWVYRP…EAESCPFRVA (157 aa)) is 4 X 34 AA approximate repeats. The segment at 355–511 (AFLSAWVYRP…EAESCPFRVA (157 aa)) is interaction with SMAD7. Positions 388–397 (SSATPPTSAF) are enriched in polar residues. Phosphotyrosine is present on tyrosine 403. Positions 407–425 (DTEEEEDCDSEATEDEGEA) are enriched in acidic residues. Tyrosine 443 carries the phosphotyrosine modification. Acidic residues predominate over residues 448-461 (DTEEEDEYEDEDNE). Positions 484–556 (IYQPGEKTDG…DLERLLKTRK (73 aa)) are interaction with KMT2A/MLL1. Residues 489–501 (EKTDGGEAAEKWG) show a composition bias toward basic and acidic residues. Tyrosine 513 is subject to Phosphotyrosine. Residues 537–584 (KSAQTPTRHQDLERLLKTRKVRFSEKVSIHPLVVWAGPAQAARRGPWE) are interaction with SMARCB1. Residues 622 to 670 (NPPTSLATVPAPTQTSPMTPIQATPLSHALASPSPPCVSPSLDLSGRRG) form a disordered region. The span at 623-645 (PPTSLATVPAPTQTSPMTPIQAT) shows a compositional bias: polar residues.

Belongs to the PPP1R15 family. Interacts with PPP1CA. Interacts with EIF2S1. Interacts with PCNA. Interacts with LYN and KMT2A/MLL1. Interacts with PPP1R1A and SMARCB1. Interacts with SMAD7. Interacts with BAG1. Interacts with NOX4. Post-translationally, phosphorylated on tyrosine by LYN; which impairs its antiproliferative activity. Polyubiquitinated. Exhibits a rapid proteasomal degradation with a half-life under 1 hour, ubiquitination depends on endoplasmic reticulum association.

The protein resides in the endoplasmic reticulum membrane. It localises to the mitochondrion outer membrane. In terms of biological role, recruits the serine/threonine-protein phosphatase PPP1CA to prevents excessive phosphorylation of the translation initiation factor eIF-2A/EIF2S1, thereby reversing the shut-off of protein synthesis initiated by stress-inducible kinases and facilitating recovery of cells from stress. Down-regulates the TGF-beta signaling pathway by promoting dephosphorylation of TGFB1 by PP1. May promote apoptosis by inducing TP53 phosphorylation on 'Ser-15'. Plays an essential role in autophagy by tuning translation during starvation, thus enabling lysosomal biogenesis and a sustained autophagic flux. This Bos taurus (Bovine) protein is Protein phosphatase 1 regulatory subunit 15A (PPP1R15A).